A 248-amino-acid polypeptide reads, in one-letter code: Tyrosine recombinase XerD-like (248 aa).

Positions 1–72 (MKSYIEPFIA…TANQFLYYLY (72 aa)) constitute a Core-binding (CB) domain. The Tyr recombinase domain maps to 85–248 (DTMKVMRTEK…PVTLEKYYKS (164 aa)). Catalysis depends on residues K149 and R213. The O-(3'-phospho-DNA)-tyrosine intermediate role is filled by Y245.

The protein belongs to the 'phage' integrase family. XerD-like subfamily.

It is found in the cytoplasm. Putative tyrosine recombinase. Not involved in the cutting and rejoining of the recombining DNA molecules on dif(SL) site. In Streptococcus pyogenes serotype M6 (strain ATCC BAA-946 / MGAS10394), this protein is Tyrosine recombinase XerD-like.